The primary structure comprises 126 residues: Flagellar protein FliT (126 aa).

Residues 1 to 50 (MASPHRLLKDYQQLLSLSQKILHLAVNGQWDTLVEQEIVYVQSVEGLVNT) form a required for homodimerization region. The segment at 60–98 (MRLHLRQILQEVMDNEAKVKQLLQKRMDELSSLMGQSLK) is fliD binding.

Belongs to the FliT family. As to quaternary structure, homodimer. Interacts with FliD and FlhC.

Its subcellular location is the cytoplasm. The protein resides in the cytosol. Functionally, dual-function protein that regulates the transcription of class 2 flagellar operons and that also acts as an export chaperone for the filament-capping protein FliD. As a transcriptional regulator, acts as an anti-FlhDC factor; it directly binds FlhC, thus inhibiting the binding of the FlhC/FlhD complex to class 2 promoters, resulting in decreased expression of class 2 flagellar operons. As a chaperone, effects FliD transition to the membrane by preventing its premature polymerization, and by directing it to the export apparatus. This is Flagellar protein FliT from Pectobacterium carotovorum subsp. carotovorum (strain PC1).